We begin with the raw amino-acid sequence, 272 residues long: Pyrroline-5-carboxylate reductase (272 aa).

Belongs to the pyrroline-5-carboxylate reductase family.

The protein resides in the cytoplasm. The catalysed reaction is L-proline + NADP(+) = (S)-1-pyrroline-5-carboxylate + NADPH + 2 H(+). The enzyme catalyses L-proline + NAD(+) = (S)-1-pyrroline-5-carboxylate + NADH + 2 H(+). It functions in the pathway amino-acid biosynthesis; L-proline biosynthesis; L-proline from L-glutamate 5-semialdehyde: step 1/1. Functionally, catalyzes the reduction of 1-pyrroline-5-carboxylate (PCA) to L-proline. The protein is Pyrroline-5-carboxylate reductase of Vibrio alginolyticus.